A 533-amino-acid polypeptide reads, in one-letter code: Protein mono-ADP-ribosyltransferase PARP3 (533 aa).

The tract at residues 1–30 is disordered; that stretch reads MAPKRKASVQTEGSKKRRQGTEEEDSFRST. Lys-6 is modified (N6-(ADP-ribosyl)lysine). At Glu-12 the chain carries ADP-ribosyl glutamic acid. The Nuclear localization signal signature appears at 14 to 18; it reads SKKRR. An ADP-ribosyl glutamic acid mark is found at Glu-24 and Glu-32. The WGR domain maps to 57-147; sequence GIQVHEDYDC…DRFVAQPNKY (91 aa). An ADP-ribosyl aspartic acid modification is found at Asp-138. ADP-ribosyl glutamic acid occurs at positions 160, 230, 309, and 310. A PARP alpha-helical domain is found at 181-299; that stretch reads PCSLDPATQN…DIELAQTLQA (119 aa). Positions 313-533 constitute a PARP catalytic domain; that stretch reads HPLDRDYQLL…RLRYLLEIHL (221 aa).

The protein belongs to the ARTD/PARP family. In terms of assembly, interacts with PARP1; leading to activate PARP1 in absence of DNA. Interacts with PRKDC. Interacts with XRCC5/Ku80; the interaction is dependent on nucleic acids. Interacts with XRCC6/Ku70; the interaction is dependent on nucleic acids. Interacts with EZH2, HDAC1, HDAC2, SUZ12, YY1, LRIG3 and LIG4. Auto-ADP-ribosylated.

Its subcellular location is the nucleus. It is found in the chromosome. The protein resides in the cytoplasm. It localises to the cytoskeleton. The protein localises to the microtubule organizing center. Its subcellular location is the centrosome. It is found in the centriole. It carries out the reaction L-aspartyl-[protein] + NAD(+) = 4-O-(ADP-D-ribosyl)-L-aspartyl-[protein] + nicotinamide. The catalysed reaction is L-glutamyl-[protein] + NAD(+) = 5-O-(ADP-D-ribosyl)-L-glutamyl-[protein] + nicotinamide. It catalyses the reaction L-lysyl-[protein] + NAD(+) = N(6)-(ADP-D-ribosyl)-L-lysyl-[protein] + nicotinamide + H(+). In terms of biological role, mono-ADP-ribosyltransferase that mediates mono-ADP-ribosylation of target proteins and plays a key role in the response to DNA damage. Mediates mono-ADP-ribosylation of glutamate, aspartate or lysine residues on target proteins. In contrast to PARP1 and PARP2, it is not able to mediate poly-ADP-ribosylation. Involved in DNA repair by mediating mono-ADP-ribosylation of a limited number of acceptor proteins involved in chromatin architecture and in DNA metabolism, such as histone H2B, XRCC5 and XRCC6. ADP-ribosylation follows DNA damage and appears as an obligatory step in a detection/signaling pathway leading to the reparation of DNA strand breaks. Involved in single-strand break repair by catalyzing mono-ADP-ribosylation of histone H2B on 'Glu-2' (H2BE2ADPr) of nucleosomes containing nicked DNA. Cooperates with the XRCC5-XRCC6 (Ku80-Ku70) heterodimer to limit end-resection thereby promoting accurate NHEJ. Suppresses G-quadruplex (G4) structures in response to DNA damage. Associates with a number of DNA repair factors and is involved in the response to exogenous and endogenous DNA strand breaks. Together with APLF, promotes the retention of the LIG4-XRCC4 complex on chromatin and accelerate DNA ligation during non-homologous end-joining (NHEJ). May link the DNA damage surveillance network to the mitotic fidelity checkpoint. Acts as a negative regulator of immunoglobulin class switch recombination, probably by controlling the level of AICDA /AID on the chromatin. In addition to proteins, also able to ADP-ribosylate DNA: mediates DNA mono-ADP-ribosylation of DNA strand break termini via covalent addition of a single ADP-ribose moiety to a 5'- or 3'-terminal phosphate residues in DNA containing multiple strand breaks. This is Protein mono-ADP-ribosyltransferase PARP3 from Mus musculus (Mouse).